The chain runs to 205 residues: N-(5'-phosphoribosyl)anthranilate isomerase (205 aa).

Belongs to the TrpF family.

It carries out the reaction N-(5-phospho-beta-D-ribosyl)anthranilate = 1-(2-carboxyphenylamino)-1-deoxy-D-ribulose 5-phosphate. It functions in the pathway amino-acid biosynthesis; L-tryptophan biosynthesis; L-tryptophan from chorismate: step 3/5. In Thermotoga petrophila (strain ATCC BAA-488 / DSM 13995 / JCM 10881 / RKU-1), this protein is N-(5'-phosphoribosyl)anthranilate isomerase.